The chain runs to 620 residues: Tyrosine-protein kinase ITK/TSK (620 aa).

Positions 4-111 (FILLEEQLIK…WVLALKEETR (108 aa)) constitute a PH domain. The Btk-type zinc finger occupies 113–149 (NNSLVPKYHPNFWMDGKWRCCSQLEKLATGCAQYDPT). Residues His-121, Cys-132, Cys-133, and Cys-143 each coordinate Zn(2+). The SH3 domain occupies 171-231 (PEETVVIALY…PSSYLVEKSP (61 aa)). At Tyr-180 the chain carries Phosphotyrosine; by autocatalysis. The SH2 domain occupies 239–338 (WYNKSISRDK…GLVTRLRYPV (100 aa)). Residues 363–615 (LTFVQEIGSG…SRLLRQLAEI (253 aa)) form the Protein kinase domain. Residues 369–377 (IGSGQFGLV) and Lys-391 each bind ATP. Catalysis depends on Asp-482, which acts as the Proton acceptor. At Tyr-512 the chain carries Phosphotyrosine; by LCK. Ser-565 carries the post-translational modification Phosphoserine.

This sequence belongs to the protein kinase superfamily. Tyr protein kinase family. TEC subfamily. As to quaternary structure, homooligomerizes; this association negatively regulates kinase activity. Interacts with PPIA/CYPA; this interaction regulates TCR signal strength via a proline-directed conformational switch in ITK. Interacts with THEMIS. Interacts with FASLG. Interacts with VAV1; this interaction is important for VAV1 localization and TCR-induced actin polarization. Interacts with TBX21. Zn(2+) serves as cofactor. In terms of processing, phosphorylated at Tyr-512 in the activation loop of the kinase domain by LCK. Subsequent autophosphorylation at Tyr-180 leads to the kinase activation. The autophosphorylated Tyr-180 lies within the substrate binding sequence of the SH3 domain. Post-translationally, ubiquitinated. As to expression, T-cell lines and natural killer cell lines.

It localises to the cytoplasm. Its subcellular location is the nucleus. It carries out the reaction L-tyrosyl-[protein] + ATP = O-phospho-L-tyrosyl-[protein] + ADP + H(+). Functionally, tyrosine kinase that plays an essential role in regulation of the adaptive immune response. Regulates the development, function and differentiation of conventional T-cells and nonconventional NKT-cells. When antigen presenting cells (APC) activate T-cell receptor (TCR), a series of phosphorylation lead to the recruitment of ITK to the cell membrane, in the vicinity of the stimulated TCR receptor, where it is phosphorylated by LCK. Phosphorylation leads to ITK autophosphorylation and full activation. Once activated, phosphorylates PLCG1, leading to the activation of this lipase and subsequent cleavage of its substrates. In turn, the endoplasmic reticulum releases calcium in the cytoplasm and the nuclear activator of activated T-cells (NFAT) translocates into the nucleus to perform its transcriptional duty. Phosphorylates 2 essential adapter proteins: the linker for activation of T-cells/LAT protein and LCP2. Then, a large number of signaling molecules such as VAV1 are recruited and ultimately lead to lymphokine production, T-cell proliferation and differentiation. Required for TCR-mediated calcium response in gamma-delta T-cells, may also be involved in the modulation of the transcriptomic signature in the Vgamma2-positive subset of immature gamma-delta T-cells. Phosphorylates TBX21 at 'Tyr-530' and mediates its interaction with GATA3. The protein is Tyrosine-protein kinase ITK/TSK (ITK) of Homo sapiens (Human).